The chain runs to 319 residues: ATP-dependent 6-phosphofructokinase (319 aa).

ATP is bound at residue Gly11. Residue 21–25 (RAVVR) coordinates ADP. ATP-binding positions include 72–73 (RC) and 102–105 (GDGS). Asp103 contacts Mg(2+). Position 125–127 (125–127 (TID)) interacts with substrate. Asp127 (proton acceptor) is an active-site residue. Residue Arg154 coordinates ADP. Residues Arg162 and 169–171 (MGR) each bind substrate. Residues 185 to 187 (GAE), Arg211, and 213 to 215 (KKH) contribute to the ADP site. Substrate contacts are provided by residues Glu222, Arg243, and 249 to 252 (HIQR).

Belongs to the phosphofructokinase type A (PFKA) family. ATP-dependent PFK group I subfamily. Prokaryotic clade 'B1' sub-subfamily. In terms of assembly, homotetramer. Component of a possible RNA degradosome complex composed of rny, rnjA, rnjB, pnp, pfkA and eno (although rnjA and rnjB's presence is unclear). Specifically interacts with RNase Y (rny, PubMed:21803996) and enolase (eno, PubMed:22198292). Interacts with BrxC. It depends on Mg(2+) as a cofactor.

The protein resides in the cytoplasm. It carries out the reaction beta-D-fructose 6-phosphate + ATP = beta-D-fructose 1,6-bisphosphate + ADP + H(+). It functions in the pathway carbohydrate degradation; glycolysis; D-glyceraldehyde 3-phosphate and glycerone phosphate from D-glucose: step 3/4. Allosterically activated by ADP and other diphosphonucleosides, and allosterically inhibited by phosphoenolpyruvate. In terms of biological role, catalyzes the phosphorylation of D-fructose 6-phosphate to fructose 1,6-bisphosphate by ATP, the first committing step of glycolysis. This chain is ATP-dependent 6-phosphofructokinase, found in Bacillus subtilis (strain 168).